The sequence spans 134 residues: Cytochrome b (134 aa).

Transmembrane regions (helical) follow at residues 33–53 (FGSL…FLAM), 77–98 (WLIR…FLHV), and 113–133 (WNIG…GYVL). The heme b site is built by histidine 83 and histidine 97.

It belongs to the cytochrome b family. As to quaternary structure, the cytochrome bc1 complex contains 11 subunits: 3 respiratory subunits (MT-CYB, CYC1 and UQCRFS1), 2 core proteins (UQCRC1 and UQCRC2) and 6 low-molecular weight proteins (UQCRH/QCR6, UQCRB/QCR7, UQCRQ/QCR8, UQCR10/QCR9, UQCR11/QCR10 and a cleavage product of UQCRFS1). This cytochrome bc1 complex then forms a dimer. Heme b is required as a cofactor.

The protein localises to the mitochondrion inner membrane. Functionally, component of the ubiquinol-cytochrome c reductase complex (complex III or cytochrome b-c1 complex) that is part of the mitochondrial respiratory chain. The b-c1 complex mediates electron transfer from ubiquinol to cytochrome c. Contributes to the generation of a proton gradient across the mitochondrial membrane that is then used for ATP synthesis. This is Cytochrome b (MT-CYB) from Sorex shinto sadonis (Sado shrew).